Here is a 131-residue protein sequence, read N- to C-terminus: MSAKTEEILESLKSLSLLEASELVKQIEEAFGVSAAASAGVVMAAPGATGGDGDGGAAEEKTEFDVVLESFDAAAKIKVLKVVRNATGLGLGDAKALVESAPKTVKEGIAKADAESLKKEIEEAGGKVTLK.

It belongs to the bacterial ribosomal protein bL12 family. As to quaternary structure, homodimer. Part of the ribosomal stalk of the 50S ribosomal subunit. Forms a multimeric L10(L12)X complex, where L10 forms an elongated spine to which 2 to 4 L12 dimers bind in a sequential fashion. Binds GTP-bound translation factors.

Its function is as follows. Forms part of the ribosomal stalk which helps the ribosome interact with GTP-bound translation factors. Is thus essential for accurate translation. The sequence is that of Large ribosomal subunit protein bL12 from Prochlorococcus marinus (strain MIT 9312).